The chain runs to 812 residues: Lon protease (812 aa).

Residues 11-204 form the Lon N-terminal domain; the sequence is IPVLPLRDVV…YLMAMMESEI (194 aa). 356 to 363 contacts ATP; that stretch reads GPPGVGKT. Positions 592–773 constitute a Lon proteolytic domain; the sequence is ENRVGQVTGL…EEEQTLSLQN (182 aa). Active-site residues include S679 and K722. Positions 745-764 are enriched in basic and acidic residues; it reads KENPDNAKADQDRHPVKNNE. Residues 745–766 are disordered; sequence KENPDNAKADQDRHPVKNNEEE.

It belongs to the peptidase S16 family. In terms of assembly, homohexamer. Organized in a ring with a central cavity. ATP binding and hydrolysis do not affect the oligomeric state of the enzyme.

Its subcellular location is the cytoplasm. It carries out the reaction Hydrolysis of proteins in presence of ATP.. Its activity is regulated as follows. Contains an allosteric site (distinct from its active site), whose occupancy by an unfolded polypeptide leads to enzyme activation. Functionally, ATP-dependent serine protease that mediates the selective degradation of mutant and abnormal proteins as well as certain short-lived regulatory proteins. Required for cellular homeostasis and for survival from DNA damage and developmental changes induced by stress. Degrades polypeptides processively to yield small peptide fragments that are 5 to 10 amino acids long. Binds to DNA in a double-stranded, site-specific manner. Endogenous substrates include the regulatory proteins RcsA and SulA, the transcriptional activator SoxS, and UmuD. Its overproduction specifically inhibits translation through at least two different pathways, one of them being the YoeB-YefM toxin-antitoxin system. The polypeptide is Lon protease (Shigella dysenteriae serotype 1 (strain Sd197)).